The primary structure comprises 156 residues: Ribonuclease pancreatic (156 aa).

A signal peptide spans 1-28 (MALEKSLALLPLLVLVLLVLGWVQPSLG). A compositionally biased stretch (basic and acidic residues) spans 33–43 (AKKFQRQHMDS). Residues 33–52 (AKKFQRQHMDSDGSPSSNPT) form a disordered region. Positions 35 and 38 each coordinate substrate. The active-site Proton acceptor is the H40. Cystine bridges form between C54–C112, C68–C123, C86–C138, and C93–C100. N62 carries N-linked (GlcNAc...) asparagine glycosylation. 69 to 73 (KPVNT) lines the substrate pocket. N90 is a glycosylation site (N-linked (GlcNAc...) asparagine). Substrate contacts are provided by K94 and R113. N-linked (GlcNAc...) asparagine glycosylation is present at N116. H147 functions as the Proton donor in the catalytic mechanism.

The protein belongs to the pancreatic ribonuclease family. In terms of assembly, monomer. Interacts with and forms tight 1:1 complexes with RNH1. Dimerization of two such complexes may occur. Interaction with RNH1 inhibits this protein.

The protein localises to the secreted. The catalysed reaction is an [RNA] containing cytidine + H2O = an [RNA]-3'-cytidine-3'-phosphate + a 5'-hydroxy-ribonucleotide-3'-[RNA].. The enzyme catalyses an [RNA] containing uridine + H2O = an [RNA]-3'-uridine-3'-phosphate + a 5'-hydroxy-ribonucleotide-3'-[RNA].. Its function is as follows. Endonuclease that catalyzes the cleavage of RNA on the 3' side of pyrimidine nucleotides. Acts on single-stranded and double-stranded RNA. The chain is Ribonuclease pancreatic (RNASE1) from Ateles geoffroyi (Black-handed spider monkey).